A 183-amino-acid chain; its full sequence is Thioredoxin/glutathione peroxidase BtuE (183 aa).

Cys37 is a catalytic residue.

The protein belongs to the glutathione peroxidase family. BtuE subfamily.

The protein resides in the periplasm. It catalyses the reaction 2 glutathione + H2O2 = glutathione disulfide + 2 H2O. The enzyme catalyses a hydroperoxide + [thioredoxin]-dithiol = an alcohol + [thioredoxin]-disulfide + H2O. In terms of biological role, non-specific peroxidase that can use thioredoxin or glutathione as a reducing agent. In vitro, utilizes preferentially thioredoxin A to decompose hydrogen peroxide as well as cumene-, tert-butyl-, and linoleic acid hydroperoxides, suggesting that it may have one or more organic hydroperoxide as its physiological substrate. The polypeptide is Thioredoxin/glutathione peroxidase BtuE (Escherichia coli (strain K12)).